A 132-amino-acid chain; its full sequence is Fatty acid-binding protein, adipocyte (132 aa).

At Cys2 the chain carries N-acetylcysteine. A Phosphoserine modification is found at Ser13. Tyr20 is subject to Phosphotyrosine; by Tyr-kinases. A Nuclear localization signal motif is present at residues 22–32; that stretch reads KEVGVGFATRK. Residue 127 to 129 coordinates a fatty acid; it reads RVY.

The protein belongs to the calycin superfamily. Fatty-acid binding protein (FABP) family. Monomer. Homodimer. Interacts with PPARG.

The protein localises to the cytoplasm. The protein resides in the nucleus. Functionally, lipid transport protein in adipocytes. Binds both long chain fatty acids and retinoic acid. Delivers long-chain fatty acids and retinoic acid to their cognate receptors in the nucleus. FABPs are important elements related to the hibernating state in mammals. The protein is Fatty acid-binding protein, adipocyte (FABP4) of Ictidomys tridecemlineatus (Thirteen-lined ground squirrel).